The following is a 632-amino-acid chain: CREB-regulated transcription coactivator 3 (632 aa).

Ser-66 is subject to Phosphoserine. The span at 105 to 115 shows a compositional bias: basic residues; it reads NRLHSSHHRPV. Residues 105-156 form a disordered region; sequence NRLHSSHHRPVEKHGRQCDSSPYGSVYLSPPPDNNWRRTNSDSALHTSASSS. The residue at position 133 (Ser-133) is a Phosphoserine. Ser-145 carries the phosphoserine; by SIK2 modification. Residues 145–156 show a composition bias toward low complexity; sequence SDSALHTSASSS. Thr-151 carries the post-translational modification Phosphothreonine. Position 293 is a phosphoserine (Ser-293). Residues 310–338 show a composition bias toward polar residues; sequence GIQNTCSNPSIQATMNNNVNNHTPPGRNN. Residues 310-455 form a disordered region; sequence GIQNTCSNPS…ESQNFQPPSP (146 aa). The span at 339–360 shows a compositional bias: low complexity; it reads PTLHPSLRLSSLSNPSLPTSAL. A phosphoserine mark is found at Ser-372 and Ser-391. Residues 372-405 show a composition bias toward polar residues; the sequence is SPLTLTPGSESNRSISNQFSPTSPMDMLPNSQGV. The span at 413 to 424 shows a compositional bias: pro residues; the sequence is SLPPLEPPPPYP. The segment covering 425-440 has biased composition (low complexity); it reads LYTDQPQPQLHHTQQQ. Phosphoserine is present on Ser-556.

This sequence belongs to the TORC family. In terms of assembly, binding, as a tetramer, through its N-terminal region, with the bZIP domain of creb1 enhances recruitment of taf4 to the promoter. 'Arg-300' in the bZIP domain of creb1 is essential for this interaction.

Its subcellular location is the nucleus. The protein localises to the cytoplasm. In terms of biological role, transcriptional coactivator for creb1 which activates transcription through both consensus and variant cAMP response element (CRE) sites. Acts as a coactivator, in the SIK/TORC signaling pathway, being active when dephosphorylated and acts independently of creb1 'Ser-119' phosphorylation. Enhances the interaction of creb1 with taf4. Regulates the expression of specific CREB-activated genes such as the steroidogenic gene, StAR. Potent coactivator of ppargc1a and inducer of mitochondrial biogenesis in muscle cells. The sequence is that of CREB-regulated transcription coactivator 3 (crtc3) from Xenopus laevis (African clawed frog).